We begin with the raw amino-acid sequence, 321 residues long: Small ribosomal subunit biogenesis GTPase RsgA (321 aa).

The CP-type G domain maps to 89–248 (QSWINRPPVA…VADTPGFNRP (160 aa)). GTP contacts are provided by residues 138 to 141 (TKRD) and 190 to 198 (GPSGVGKTS). Zn(2+) contacts are provided by C273, C278, H280, and C286.

The protein belongs to the TRAFAC class YlqF/YawG GTPase family. RsgA subfamily. Monomer. Associates with 30S ribosomal subunit, binds 16S rRNA. Requires Zn(2+) as cofactor.

The protein resides in the cytoplasm. Its function is as follows. One of several proteins that assist in the late maturation steps of the functional core of the 30S ribosomal subunit. Helps release RbfA from mature subunits. May play a role in the assembly of ribosomal proteins into the subunit. Circularly permuted GTPase that catalyzes slow GTP hydrolysis, GTPase activity is stimulated by the 30S ribosomal subunit. The sequence is that of Small ribosomal subunit biogenesis GTPase RsgA from Prochlorococcus marinus (strain MIT 9313).